A 369-amino-acid polypeptide reads, in one-letter code: Ribosomal RNA large subunit methyltransferase G (369 aa).

The protein belongs to the methyltransferase superfamily. RlmG family.

Its subcellular location is the cytoplasm. It carries out the reaction guanosine(1835) in 23S rRNA + S-adenosyl-L-methionine = N(2)-methylguanosine(1835) in 23S rRNA + S-adenosyl-L-homocysteine + H(+). Specifically methylates the guanine in position 1835 (m2G1835) of 23S rRNA. The protein is Ribosomal RNA large subunit methyltransferase G of Magnetococcus marinus (strain ATCC BAA-1437 / JCM 17883 / MC-1).